Here is a 160-residue protein sequence, read N- to C-terminus: Cyclic pyranopterin monophosphate synthase (160 aa).

Residues 77–79 (MCH) and 114–115 (ME) contribute to the substrate site. Asp-129 is a catalytic residue.

Belongs to the MoaC family. In terms of assembly, homohexamer; trimer of dimers.

It carries out the reaction (8S)-3',8-cyclo-7,8-dihydroguanosine 5'-triphosphate = cyclic pyranopterin phosphate + diphosphate. It functions in the pathway cofactor biosynthesis; molybdopterin biosynthesis. Its function is as follows. Catalyzes the conversion of (8S)-3',8-cyclo-7,8-dihydroguanosine 5'-triphosphate to cyclic pyranopterin monophosphate (cPMP). This is Cyclic pyranopterin monophosphate synthase from Listeria monocytogenes serovar 1/2a (strain ATCC BAA-679 / EGD-e).